We begin with the raw amino-acid sequence, 220 residues long: Lipoprotein-releasing system ATP-binding protein LolD (220 aa).

Positions 1–220 (MRAVDIHKSY…YRMKDGQWQS (220 aa)) constitute an ABC transporter domain. Residue 37 to 44 (GASGAGKS) coordinates ATP.

The protein belongs to the ABC transporter superfamily. Lipoprotein translocase (TC 3.A.1.125) family. In terms of assembly, the complex is composed of two ATP-binding proteins (LolD) and two transmembrane proteins (LolC and LolE).

It is found in the cell inner membrane. In terms of biological role, part of the ABC transporter complex LolCDE involved in the translocation of mature outer membrane-directed lipoproteins, from the inner membrane to the periplasmic chaperone, LolA. Responsible for the formation of the LolA-lipoprotein complex in an ATP-dependent manner. The sequence is that of Lipoprotein-releasing system ATP-binding protein LolD from Bdellovibrio bacteriovorus (strain ATCC 15356 / DSM 50701 / NCIMB 9529 / HD100).